We begin with the raw amino-acid sequence, 86 residues long: MANIKSQIKRNKQNEKRHERNKAVKTGLKTAVRKFREAAEAGDKDTAVALGQDAARKLDKAASKGVIHKNQAANRKSAIAKKAASL.

The segment at 1–25 (MANIKSQIKRNKQNEKRHERNKAVK) is disordered. Positions 12–22 (KQNEKRHERNK) are enriched in basic and acidic residues.

The protein belongs to the bacterial ribosomal protein bS20 family.

Binds directly to 16S ribosomal RNA. The polypeptide is Small ribosomal subunit protein bS20 (Nocardioides sp. (strain ATCC BAA-499 / JS614)).